Consider the following 76-residue polypeptide: Senegalin (76 aa).

Residues 1–22 form the signal peptide; that stretch reads MLSLKKSMLLLFFLGMVSFSLA. The propeptide occupies 23–55; it reads NKRSDGKRADEEGEDKRADEEGEDKRADEEGED. The segment at 24–54 is disordered; the sequence is KRSDGKRADEEGEDKRADEEGEDKRADEEGE. Leucine 75 is subject to Leucine amide.

Expressed by the skin glands.

The protein localises to the secreted. In terms of biological role, antimicrobial peptide with activity against the Gram-positive bacterium S.aureus NCTC 10788 (MIC=50 um) and the yeast C.albicans NCPF 1467 (MIC=150 uM). Ineffective against the Gram-negative bacterium E.coli NCTC 10418. Induces a dose-dependent contraction of rat urinary bladder smooth muscle (EC50=2.9 nM) and a dose-dependent relaxation of rat tail artery smooth muscle (EC50=37.7 nM). This Kassina senegalensis (Senegal running frog) protein is Senegalin.